A 172-amino-acid chain; its full sequence is Shikimate kinase (172 aa).

Position 14–19 (14–19 (GAGKST)) interacts with ATP. Ser18 is a Mg(2+) binding site. Substrate is bound by residues Asp36, Arg60, and Gly82. Arg120 is an ATP binding site. Arg139 provides a ligand contact to substrate. Residue Gln156 participates in ATP binding.

Belongs to the shikimate kinase family. In terms of assembly, monomer. The cofactor is Mg(2+).

The protein resides in the cytoplasm. It catalyses the reaction shikimate + ATP = 3-phosphoshikimate + ADP + H(+). It participates in metabolic intermediate biosynthesis; chorismate biosynthesis; chorismate from D-erythrose 4-phosphate and phosphoenolpyruvate: step 5/7. Its function is as follows. Catalyzes the specific phosphorylation of the 3-hydroxyl group of shikimic acid using ATP as a cosubstrate. The chain is Shikimate kinase from Aliivibrio salmonicida (strain LFI1238) (Vibrio salmonicida (strain LFI1238)).